Consider the following 224-residue polypeptide: Small ribosomal subunit protein uS13 (224 aa).

Basic and acidic residues predominate over residues 1–17; the sequence is MSEKTDKTEKKQKKAEE. Disordered regions lie at residues 1–64 and 184–224; these read MSEK…AEEK and HERG…EDKK. Low complexity-rich tracts occupy residues 20-30 and 38-47; these read ETASAEAAPAK and AKPAEGAPAD. The segment covering 210–224 has biased composition (basic and acidic residues); the sequence is KKGEQGGAAKKEDKK.

The protein belongs to the universal ribosomal protein uS13 family. Part of the 30S ribosomal subunit. Forms a loose heterodimer with protein S19. Forms two bridges to the 50S subunit in the 70S ribosome.

Its function is as follows. Located at the top of the head of the 30S subunit, it contacts several helices of the 16S rRNA. In the 70S ribosome it contacts the 23S rRNA (bridge B1a) and protein L5 of the 50S subunit (bridge B1b), connecting the 2 subunits; these bridges are implicated in subunit movement. The chain is Small ribosomal subunit protein uS13 from Methanocella arvoryzae (strain DSM 22066 / NBRC 105507 / MRE50).